Consider the following 287-residue polypeptide: Co-chaperone protein DjlA (287 aa).

The Periplasmic segment spans residues 1 to 6; it reads MQIFGK. A helical membrane pass occupies residues 7–30; sequence ILGAFFGFLFGGVFGALFGLFIGH. Over 31–287 the chain is Cytoplasmic; it reads QFDKARRLSQ…DLIKKEKGFK (257 aa). Positions 192–213 are disordered; sequence GGFGGQQHQSHHSSSHGGWQQA. In terms of domain architecture, J spans 221–287; the sequence is DAYKILGIDA…DLIKKEKGFK (67 aa).

As to quaternary structure, homodimer.

It localises to the cell inner membrane. Functionally, regulatory DnaK co-chaperone. Direct interaction between DnaK and DjlA is needed for the induction of the wcaABCDE operon, involved in the synthesis of a colanic acid polysaccharide capsule, possibly through activation of the RcsB/RcsC phosphotransfer signaling pathway. The colanic acid capsule may help the bacterium survive conditions outside the host. This chain is Co-chaperone protein DjlA, found in Vibrio vulnificus (strain CMCP6).